Here is a 362-residue protein sequence, read N- to C-terminus: Serpentine receptor class epsilon-37 (362 aa).

The next 7 membrane-spanning stretches (helical) occupy residues 29–49, 67–87, 127–147, 170–190, 204–224, 260–280, and 288–308; these read IFYV…YILV, IMMC…IVLI, IYFA…AVLA, IPIL…YQTT, IFIG…NLAW, LVVS…VLLF, and FFVH…SLTL.

Belongs to the nematode receptor-like protein sre family.

It is found in the membrane. In Caenorhabditis elegans, this protein is Serpentine receptor class epsilon-37 (sre-37).